Here is a 313-residue protein sequence, read N- to C-terminus: Acetyl-coenzyme A carboxylase carboxyl transferase subunit alpha (313 aa).

The 251-residue stretch at 36-286 (RLDKEVKTIY…KEYFLDTLRT (251 aa)) folds into the CoA carboxyltransferase C-terminal domain.

Belongs to the AccA family. As to quaternary structure, acetyl-CoA carboxylase is a heterohexamer composed of biotin carboxyl carrier protein (AccB), biotin carboxylase (AccC) and two subunits each of ACCase subunit alpha (AccA) and ACCase subunit beta (AccD).

The protein localises to the cytoplasm. It catalyses the reaction N(6)-carboxybiotinyl-L-lysyl-[protein] + acetyl-CoA = N(6)-biotinyl-L-lysyl-[protein] + malonyl-CoA. It participates in lipid metabolism; malonyl-CoA biosynthesis; malonyl-CoA from acetyl-CoA: step 1/1. Its function is as follows. Component of the acetyl coenzyme A carboxylase (ACC) complex. First, biotin carboxylase catalyzes the carboxylation of biotin on its carrier protein (BCCP) and then the CO(2) group is transferred by the carboxyltransferase to acetyl-CoA to form malonyl-CoA. This is Acetyl-coenzyme A carboxylase carboxyl transferase subunit alpha from Helicobacter acinonychis (strain Sheeba).